The sequence spans 407 residues: Nicotinate phosphoribosyltransferase (407 aa).

A Phosphohistidine; by autocatalysis modification is found at His224.

The protein belongs to the NAPRTase family. Transiently phosphorylated on a His residue during the reaction cycle. Phosphorylation strongly increases the affinity for substrates and increases the rate of nicotinate D-ribonucleotide production. Dephosphorylation regenerates the low-affinity form of the enzyme, leading to product release.

The catalysed reaction is nicotinate + 5-phospho-alpha-D-ribose 1-diphosphate + ATP + H2O = nicotinate beta-D-ribonucleotide + ADP + phosphate + diphosphate. Its pathway is cofactor biosynthesis; NAD(+) biosynthesis; nicotinate D-ribonucleotide from nicotinate: step 1/1. Functionally, catalyzes the synthesis of beta-nicotinate D-ribonucleotide from nicotinate and 5-phospho-D-ribose 1-phosphate at the expense of ATP. The protein is Nicotinate phosphoribosyltransferase of Pseudomonas syringae pv. tomato (strain ATCC BAA-871 / DC3000).